A 549-amino-acid chain; its full sequence is Tegument protein (549 aa).

3 disordered regions span residues lysine 50–proline 92, glutamate 353–tyrosine 391, and threonine 523–proline 542. Polar residues-rich tracts occupy residues proline 75–serine 84 and aspartate 356–arginine 369. Over residues threonine 523–arginine 534 the composition is skewed to low complexity.

This viral structural protein may have important functions, such as protein kinase activity, DNA binding, and possible transcriptional activation of immediate-early genes. The chain is Tegument protein from Homo sapiens (Human).